Here is an 835-residue protein sequence, read N- to C-terminus: uncharacterized protein (835 aa).

Disordered stretches follow at residues 1-38 (MKTS…VGSR), 317-477 (DFDL…QSGR), 489-668 (SLSK…IKRR), 721-750 (DLEN…VSSF), and 810-835 (QEQQ…ELMF). 3 stretches are compositionally biased toward low complexity: residues 7–37 (STVP…TVGS), 328–351 (NNNN…TPTT), and 361–395 (SSTN…SGSS). 2 stretches are compositionally biased toward polar residues: residues 396-406 (IGNRTEVSSSI) and 415-424 (IIRSKSSLGT). A compositionally biased stretch (gly residues) spans 432 to 442 (GGSGGGGGGGM). Over residues 449–477 (PISKTPTTMITKTASSSSPNLATSTQSGR) the composition is skewed to polar residues. Residues 489-510 (SLSKQSSSSNLTRSLPPIIKSP) show a composition bias toward low complexity. Positions 511–521 (ISPPGPTPPAP) are enriched in pro residues. Positions 522–629 (TLTKSKSTPS…STTSSATKKS (108 aa)) are enriched in low complexity. The span at 631 to 640 (ITKTNPTDEQ) shows a compositional bias: polar residues. Composition is skewed to low complexity over residues 641–664 (TTTP…STSS) and 724–750 (NNNN…VSSF). Acidic residues predominate over residues 826–835 (ILDEDDELMF).

This is an uncharacterized protein from Dictyostelium discoideum (Social amoeba).